The chain runs to 97 residues: MGFNIWSLLIILLIVALLFGTKKLRNIGGDLGGAIRGFKESMREGEEEEAQKRADGESSDEPEPLEHQDEPAPEQTTQARESSSARQSAEHHDRSTS.

A helical transmembrane segment spans residues 1–21 (MGFNIWSLLIILLIVALLFGT). Residues 28-97 (GGDLGGAIRG…SAEHHDRSTS (70 aa)) are disordered. The segment covering 37-56 (GFKESMREGEEEEAQKRADG) has biased composition (basic and acidic residues). Residues 78–87 (QARESSSARQ) show a composition bias toward low complexity. The span at 88–97 (SAEHHDRSTS) shows a compositional bias: basic and acidic residues.

This sequence belongs to the TatA/E family. In terms of assembly, the Tat system comprises two distinct complexes: a TatABC complex, containing multiple copies of TatA, TatB and TatC subunits, and a separate TatA complex, containing only TatA subunits. Substrates initially bind to the TatABC complex, which probably triggers association of the separate TatA complex to form the active translocon.

The protein localises to the cell inner membrane. In terms of biological role, part of the twin-arginine translocation (Tat) system that transports large folded proteins containing a characteristic twin-arginine motif in their signal peptide across membranes. TatA could form the protein-conducting channel of the Tat system. The chain is Sec-independent protein translocase protein TatA from Halorhodospira halophila (strain DSM 244 / SL1) (Ectothiorhodospira halophila (strain DSM 244 / SL1)).